A 248-amino-acid chain; its full sequence is Protein STPG4 (248 aa).

In terms of assembly, interacts with histone H3. Interacts with histone H4.

The protein resides in the cytoplasm. It is found in the nucleus. In terms of biological role, maternal factor that plays a role in epigenetic chromatin reprogramming during early development of the zygote. Involved in the regulation of gametic DNA demethylation by inducing the conversion of the modified genomic base 5-methylcytosine (5mC) into 5-hydroxymethylcytosine (5hmC). The chain is Protein STPG4 from Homo sapiens (Human).